A 348-amino-acid polypeptide reads, in one-letter code: UDP-glucose 4-epimerase (348 aa).

NAD(+) is bound by residues 12–14 (GYI), 33–37 (DNFHN), 66–67 (DI), F88, and K92. Position 132–134 (132–134 (SAT)) interacts with substrate. Y157 (proton acceptor) is an active-site residue. NAD(+) contacts are provided by K161 and Y185. Substrate is bound by residues 185 to 187 (YFN), 206 to 208 (NNL), 224 to 226 (NVF), R239, and 300 to 303 (REGD).

The protein belongs to the NAD(P)-dependent epimerase/dehydratase family. As to quaternary structure, homodimer. It depends on NAD(+) as a cofactor.

It carries out the reaction UDP-alpha-D-glucose = UDP-alpha-D-galactose. The catalysed reaction is UDP-N-acetyl-alpha-D-glucosamine = UDP-N-acetyl-alpha-D-galactosamine. It functions in the pathway carbohydrate metabolism; galactose metabolism. In terms of biological role, catalyzes two distinct but analogous reactions: the reversible epimerization of UDP-glucose to UDP-galactose and the reversible epimerization of UDP-N-acetylglucosamine to UDP-N-acetylgalactosamine. The reaction with UDP-Gal plays a critical role in the Leloir pathway of galactose catabolism in which galactose is converted to the glycolytic intermediate glucose 6-phosphate. It contributes to the catabolism of dietary galactose and enables the endogenous biosynthesis of both UDP-Gal and UDP-GalNAc when exogenous sources are limited. Both UDP-sugar interconversions are important in the synthesis of glycoproteins and glycolipids. In Pongo abelii (Sumatran orangutan), this protein is UDP-glucose 4-epimerase (GALE).